Here is a 261-residue protein sequence, read N- to C-terminus: Cytochrome c oxidase subunit 3 (261 aa).

Residues 1 to 15 are Mitochondrial matrix-facing; sequence MTHQTHSYHMVNPSP. Residues 16-34 form a helical membrane-spanning segment; it reads WPLTGALSALLMTSGLIMW. The Mitochondrial intermembrane portion of the chain corresponds to 35–40; it reads FHFNSM. The chain crosses the membrane as a helical span at residues 41 to 66; the sequence is ILLTLGLSTNILTMYQWWRDIIREST. The Mitochondrial matrix segment spans residues 67–72; it reads FQGHHT. Residues 73–105 form a helical membrane-spanning segment; it reads PTVQKGLRYGMILFIVSEVLFFTGFFWAFYHSS. Over 106-128 the chain is Mitochondrial intermembrane; that stretch reads LAPTPELGGCWPPTGIHPLNPLE. The helical transmembrane segment at 129–152 threads the bilayer; it reads VPLLNTSVLLASGVSITWAHHSLM. Residues 153–155 are Mitochondrial matrix-facing; the sequence is EGN. A helical membrane pass occupies residues 156–183; the sequence is RKHMLQALFITIALGLYFTLLQASEYYE. Residues 184–190 are Mitochondrial intermembrane-facing; it reads APFTISD. Residues 191–223 form a helical membrane-spanning segment; it reads GIYGSTFFVATGFHGLHVIIGSTFLIVCFLRQV. Topologically, residues 224 to 232 are mitochondrial matrix; the sequence is KFHFTSNHH. The chain crosses the membrane as a helical span at residues 233–256; sequence FGFERAAWYWHFVDVVWLFLYVSI. Over 257-261 the chain is Mitochondrial intermembrane; it reads YWWGS.

The protein belongs to the cytochrome c oxidase subunit 3 family. In terms of assembly, component of the cytochrome c oxidase (complex IV, CIV), a multisubunit enzyme composed of 14 subunits. The complex is composed of a catalytic core of 3 subunits MT-CO1, MT-CO2 and MT-CO3, encoded in the mitochondrial DNA, and 11 supernumerary subunits COX4I, COX5A, COX5B, COX6A, COX6B, COX6C, COX7A, COX7B, COX7C, COX8 and NDUFA4, which are encoded in the nuclear genome. The complex exists as a monomer or a dimer and forms supercomplexes (SCs) in the inner mitochondrial membrane with NADH-ubiquinone oxidoreductase (complex I, CI) and ubiquinol-cytochrome c oxidoreductase (cytochrome b-c1 complex, complex III, CIII), resulting in different assemblies (supercomplex SCI(1)III(2)IV(1) and megacomplex MCI(2)III(2)IV(2)).

Its subcellular location is the mitochondrion inner membrane. The enzyme catalyses 4 Fe(II)-[cytochrome c] + O2 + 8 H(+)(in) = 4 Fe(III)-[cytochrome c] + 2 H2O + 4 H(+)(out). Component of the cytochrome c oxidase, the last enzyme in the mitochondrial electron transport chain which drives oxidative phosphorylation. The respiratory chain contains 3 multisubunit complexes succinate dehydrogenase (complex II, CII), ubiquinol-cytochrome c oxidoreductase (cytochrome b-c1 complex, complex III, CIII) and cytochrome c oxidase (complex IV, CIV), that cooperate to transfer electrons derived from NADH and succinate to molecular oxygen, creating an electrochemical gradient over the inner membrane that drives transmembrane transport and the ATP synthase. Cytochrome c oxidase is the component of the respiratory chain that catalyzes the reduction of oxygen to water. Electrons originating from reduced cytochrome c in the intermembrane space (IMS) are transferred via the dinuclear copper A center (CU(A)) of subunit 2 and heme A of subunit 1 to the active site in subunit 1, a binuclear center (BNC) formed by heme A3 and copper B (CU(B)). The BNC reduces molecular oxygen to 2 water molecules using 4 electrons from cytochrome c in the IMS and 4 protons from the mitochondrial matrix. This is Cytochrome c oxidase subunit 3 (MT-CO3) from Balaenoptera musculus (Blue whale).